The chain runs to 87 residues: Small ribosomal subunit protein bS16c (87 aa).

It belongs to the bacterial ribosomal protein bS16 family.

The protein resides in the plastid. Its subcellular location is the chloroplast. This Zygnema circumcarinatum (Green alga) protein is Small ribosomal subunit protein bS16c.